Here is a 276-residue protein sequence, read N- to C-terminus: Large ribosomal subunit protein uL2 (276 aa).

Disordered stretches follow at residues 1 to 61 (MALK…HKQK) and 224 to 276 (AMNP…KKKN). Over residues 15–31 (GRIDLRKDEITAQKPEK) the composition is skewed to basic and acidic residues.

It belongs to the universal ribosomal protein uL2 family. As to quaternary structure, part of the 50S ribosomal subunit. Forms a bridge to the 30S subunit in the 70S ribosome.

In terms of biological role, one of the primary rRNA binding proteins. Required for association of the 30S and 50S subunits to form the 70S ribosome, for tRNA binding and peptide bond formation. It has been suggested to have peptidyltransferase activity; this is somewhat controversial. Makes several contacts with the 16S rRNA in the 70S ribosome. This is Large ribosomal subunit protein uL2 from Treponema denticola (strain ATCC 35405 / DSM 14222 / CIP 103919 / JCM 8153 / KCTC 15104).